The following is a 620-amino-acid chain: Translation initiation factor IF-2 (620 aa).

Positions 119–288 (ERPPIVTIMG…IILISELENL (170 aa)) constitute a tr-type G domain. The segment at 128 to 135 (GHVDHGKT) is G1. 128-135 (GHVDHGKT) provides a ligand contact to GTP. Residues 153 to 157 (GITQA) are G2. Positions 175–178 (DTPG) are G3. Residues 175–179 (DTPGH) and 229–232 (NKID) each bind GTP. A G4 region spans residues 229–232 (NKID). Residues 265-267 (SAI) are G5.

Belongs to the TRAFAC class translation factor GTPase superfamily. Classic translation factor GTPase family. IF-2 subfamily.

It localises to the cytoplasm. Its function is as follows. One of the essential components for the initiation of protein synthesis. Protects formylmethionyl-tRNA from spontaneous hydrolysis and promotes its binding to the 30S ribosomal subunits. Also involved in the hydrolysis of GTP during the formation of the 70S ribosomal complex. This Mycoplasma capricolum subsp. capricolum (strain California kid / ATCC 27343 / NCTC 10154) protein is Translation initiation factor IF-2.